Reading from the N-terminus, the 277-residue chain is Large ribosomal subunit protein uL2 (277 aa).

The segment at 218–277 (PTVRGSVMNPNDHPHGGGEGKAPVGRKAPSTPWGKPALGLKTRNKKAKSDKLIVRRRNEK) is disordered. Residues 264-277 (AKSDKLIVRRRNEK) are compositionally biased toward basic and acidic residues.

This sequence belongs to the universal ribosomal protein uL2 family. As to quaternary structure, part of the 50S ribosomal subunit. Forms a bridge to the 30S subunit in the 70S ribosome.

Its function is as follows. One of the primary rRNA binding proteins. Required for association of the 30S and 50S subunits to form the 70S ribosome, for tRNA binding and peptide bond formation. It has been suggested to have peptidyltransferase activity; this is somewhat controversial. Makes several contacts with the 16S rRNA in the 70S ribosome. The sequence is that of Large ribosomal subunit protein uL2 from Streptococcus pyogenes serotype M4 (strain MGAS10750).